A 922-amino-acid chain; its full sequence is Up-regulator of cell proliferation (922 aa).

Residues 1–20 (MASSGHSDLGEVTSEIKASE) are disordered. Serine 3 bears the Phosphoserine mark. Positions 680–920 (RSRLVVLSAL…NIQQLIELVR (241 aa)) constitute a VLIG-type G domain.

This sequence belongs to the TRAFAC class dynamin-like GTPase superfamily. Very large inducible GTPase (VLIG) family.

Its subcellular location is the cytoplasm. It localises to the nucleus. In terms of biological role, may be involved in cell cycle progression through the regulation of cyclin D1 expression. The sequence is that of Up-regulator of cell proliferation (URGCP) from Bos taurus (Bovine).